The sequence spans 615 residues: Ankyrin repeat and LEM domain-containing protein 1 (615 aa).

3 ANK repeats span residues Asp39–Ala71, Glu75–Leu104, and Asp108–Thr137. A disordered region spans residues Arg138–Pro210. The short motif at Leu271–Leu280 is the Nuclear export signal element. The span at Pro283 to Ser294 shows a compositional bias: polar residues. Residues Pro283–Ser315 form a disordered region. The LEM domain occupies His355–Pro399. The 119-residue stretch at Lys448–Gln566 folds into the GIY-YIG domain. A Nuclear localization signal motif is present at residues Pro579–Leu586.

In terms of assembly, interacts (via LEM domain) with BANF1; the interaction may favor BANF1 dimerization. Expression is predominant in adult bone marrow.

It localises to the cytoplasm. It is found in the nucleus. Its function is as follows. Endonuclease that probably plays a role in the DNA damage response and DNA repair. This Homo sapiens (Human) protein is Ankyrin repeat and LEM domain-containing protein 1 (ANKLE1).